The sequence spans 571 residues: DDB1- and CUL4-associated factor 11 homolog (571 aa).

The segment at 51–75 is disordered; the sequence is RMKPNHSNDSDTDFSSDDEGCPKMT. Residues 60-69 are compositionally biased toward acidic residues; that stretch reads SDTDFSSDDE. WD repeat units follow at residues 162-201, 266-305, 309-349, 357-396, 435-479, and 482-521; these read RVATKSFCTQYIQNGTKIVVASQDEKIRFYQRNPDKSKYR, RDHCAVFCVKFSDSSEQIVCGTSQYSIHVFDVEQRRRIRT, AHED…DGDV, GHRDGVTHVDSRQDERYLLSNSKDQTIKVWDLRKFSNMSG, GHSV…VSRR, and GHTAVVRECDWHPTENEIVSSAWDGVTTVWTWDERQEGVI.

The protein belongs to the WD repeat LEC14B family.

In terms of biological role, involved in regulation of lifespan. Required for dopaminergic CEP neuron degeneration in response to Mn(2+). Inhibits the skn-1-mediated up-regulation of tatn-1. The chain is DDB1- and CUL4-associated factor 11 homolog from Caenorhabditis elegans.